A 242-amino-acid chain; its full sequence is uncharacterized protein (242 aa).

Residues methionine 1–asparagine 12 show a composition bias toward basic and acidic residues. The segment at methionine 1 to serine 21 is disordered. The Cytoplasmic portion of the chain corresponds to methionine 1–serine 23. The chain crosses the membrane as a helical span at residues tryptophan 24 to serine 44. The Extracellular portion of the chain corresponds to methionine 45–serine 242. The interval glycine 64–glutamine 91 is disordered. Basic and acidic residues predominate over residues serine 73–aspartate 89. Residues glutamate 117–lysine 238 form the OmpA-like domain.

The protein belongs to the MotB family.

Its subcellular location is the cell membrane. Functionally, may be involved in some transport function. This is an uncharacterized protein from Bacillus subtilis (strain 168).